Consider the following 489-residue polypeptide: Glutamyl-tRNA(Gln) amidotransferase subunit A (489 aa).

Residues K80 and S160 each act as charge relay system in the active site. S184 acts as the Acyl-ester intermediate in catalysis.

It belongs to the amidase family. GatA subfamily. In terms of assembly, heterotrimer of A, B and C subunits.

It carries out the reaction L-glutamyl-tRNA(Gln) + L-glutamine + ATP + H2O = L-glutaminyl-tRNA(Gln) + L-glutamate + ADP + phosphate + H(+). Functionally, allows the formation of correctly charged Gln-tRNA(Gln) through the transamidation of misacylated Glu-tRNA(Gln) in organisms which lack glutaminyl-tRNA synthetase. The reaction takes place in the presence of glutamine and ATP through an activated gamma-phospho-Glu-tRNA(Gln). This Wolbachia pipientis wMel protein is Glutamyl-tRNA(Gln) amidotransferase subunit A.